The primary structure comprises 418 residues: Transmembrane protease serine 11A (418 aa).

The Cytoplasmic portion of the chain corresponds to 1–18 (MMYRTVGFGTRSRNLKPW). Residues 19–39 (MIAVLIVLSLTVVAVTIGLLV) form a helical; Signal-anchor for type II membrane protein membrane-spanning segment. Residues 40–418 (HFLVFDQKKE…RNWIASKTGI (379 aa)) are Extracellular-facing. Residues 47 to 164 (KKEYYHGSFK…SSVQVNAMSS (118 aa)) form the SEA domain. An N-linked (GlcNAc...) asparagine glycan is attached at Asn-153. Residues 187 to 417 (IASGVIAPKA…YRNWIASKTG (231 aa)) enclose the Peptidase S1 domain. Cysteines 212 and 228 form a disulfide. Active-site charge relay system residues include His-227 and Asp-272. N-linked (GlcNAc...) asparagine glycosylation occurs at Asn-303. 2 disulfides stabilise this stretch: Cys-337-Cys-353 and Cys-364-Cys-393. Residue Ser-368 is the Charge relay system of the active site.

Belongs to the peptidase S1 family. In terms of assembly, may interact with ZBTB17. As to expression, expressed in esophagus, liver, colon and lung. Down-regulated in esophagus cancers.

It is found in the membrane. Functionally, probable serine protease which may play a role in cellular senescence. Overexpression inhibits cell growth and induce G1 cell cycle arrest. The protein is Transmembrane protease serine 11A (TMPRSS11A) of Homo sapiens (Human).